The sequence spans 428 residues: Chaperone SurA (428 aa).

Residues 1–19 (MNIWKTLLLGMLVTGSAVS) form the signal peptide. PpiC domains are found at residues 170-268 (SVEY…KIED) and 277-377 (VTEV…EVLD).

The protein localises to the periplasm. It catalyses the reaction [protein]-peptidylproline (omega=180) = [protein]-peptidylproline (omega=0). Its function is as follows. Chaperone involved in the correct folding and assembly of outer membrane proteins. Recognizes specific patterns of aromatic residues and the orientation of their side chains, which are found more frequently in integral outer membrane proteins. May act in both early periplasmic and late outer membrane-associated steps of protein maturation. In Vibrio vulnificus (strain YJ016), this protein is Chaperone SurA.